We begin with the raw amino-acid sequence, 548 residues long: DNA ligase (548 aa).

Glu-196 contributes to the ATP binding site. The active-site N6-AMP-lysine intermediate is Lys-198. 4 residues coordinate ATP: Arg-203, Arg-218, Glu-250, and Phe-284. Glu-250 contacts a divalent metal cation. Residue Glu-345 coordinates a divalent metal cation. ATP is bound by residues Arg-361 and Lys-365. Residues 515–548 (EQLIRNSQENTKKTFARLATTYDGPSPNKKLKLN) are disordered.

The protein belongs to the ATP-dependent DNA ligase family. Requires a divalent metal cation as cofactor.

It carries out the reaction ATP + (deoxyribonucleotide)n-3'-hydroxyl + 5'-phospho-(deoxyribonucleotide)m = (deoxyribonucleotide)n+m + AMP + diphosphate.. Its function is as follows. Able to ligate a double-stranded synthetic DNA substrate containing a single nick and inefficiently ligated a 1 nucleotide gap but did not ligate a 2 nucleotide gap. It is able to ligate short, complementary overhangs but not blunt-ended double-stranded DNA. May be implicated in DNA repair and recombination. The protein is DNA ligase (LIG) of Lepidoptera (butterflies and moths).